Reading from the N-terminus, the 375-residue chain is MSLMVVSMACVGFFLLQGAWTHEGGQDKPLLSAWPSAVVPRGGHVTLLCRSRLGFTIFSLYKEDGVPVPELYNKIFWKSILMGPVTPAHAGTYRCRGSHPRSPIEWSAPSNPLVIVVTGLFGKPSLSAQPGPTVRTGENVTLSCSSRSSFDMYHLSREGRAHEPRLPAVPSVDGTFQADFPLGPATHGGTYTCFSSLHDSPYEWSDPSDPLLVSVTGNSSSSSSSPTEPSSKTGIRRHLHILIGTSVAIILFIILFFFLLHCCCSNKKNAAVMDQEPAGDRTVNREDSDDQDPQEVTYAQLDHCVFTQTKITSPSQRPKTPPTDTTMYMELPNAKPRSLSPAHKHHSQALRGSSRETTALSQNRVASSHVPAAGI.

The signal sequence occupies residues 1–21 (MSLMVVSMACVGFFLLQGAWT). Topologically, residues 22 to 238 (HEGGQDKPLL…PSSKTGIRRH (217 aa)) are extracellular. Ig-like C2-type domains lie at 42 to 102 (GGHV…HPRS) and 137 to 200 (GENV…LHDS). 2 disulfides stabilise this stretch: Cys-49/Cys-95 and Cys-144/Cys-193. Residues 213–233 (VSVTGNSSSSSSSPTEPSSKT) are disordered. N-linked (GlcNAc...) asparagine glycosylation occurs at Asn-218. Over residues 219 to 231 (SSSSSSSPTEPSS) the composition is skewed to low complexity. A helical membrane pass occupies residues 239-259 (LHILIGTSVAIILFIILFFFL). The Cytoplasmic segment spans residues 260 to 375 (LHCCCSNKKN…ASSHVPAAGI (116 aa)). The tract at residues 334–375 (AKPRSLSPAHKHHSQALRGSSRETTALSQNRVASSHVPAAGI) is disordered. The segment covering 355–366 (RETTALSQNRVA) has biased composition (polar residues).

Belongs to the immunoglobulin superfamily.

It is found in the cell membrane. Its function is as follows. Receptor on natural killer (NK) cells for HLA-C alleles. Inhibits the activity of NK cells thus preventing cell lysis. The polypeptide is Killer cell immunoglobulin-like receptor 2DL5B (KIR2DL5B) (Homo sapiens (Human)).